Consider the following 67-residue polypeptide: Large ribosomal subunit protein uL29c (67 aa).

Belongs to the universal ribosomal protein uL29 family.

Its subcellular location is the plastid. The protein localises to the chloroplast. The protein is Large ribosomal subunit protein uL29c (rpl29) of Porphyra purpurea (Red seaweed).